The following is a 265-amino-acid chain: Glutamate racemase (265 aa).

Substrate contacts are provided by residues 7-8 (DS) and 39-40 (YG). Residue C70 is the Proton donor/acceptor of the active site. 71 to 72 (NT) lines the substrate pocket. C182 functions as the Proton donor/acceptor in the catalytic mechanism. Substrate is bound at residue 183–184 (TH).

It belongs to the aspartate/glutamate racemases family.

The enzyme catalyses L-glutamate = D-glutamate. It functions in the pathway cell wall biogenesis; peptidoglycan biosynthesis. In terms of biological role, provides the (R)-glutamate required for cell wall biosynthesis. The protein is Glutamate racemase of Lachnospira eligens (strain ATCC 27750 / DSM 3376 / VPI C15-48 / C15-B4) (Eubacterium eligens).